The sequence spans 293 residues: Ribosomal protein L11 methyltransferase (293 aa).

S-adenosyl-L-methionine is bound by residues Thr145, Gly166, Asp188, and Asn230.

It belongs to the methyltransferase superfamily. PrmA family.

It localises to the cytoplasm. It carries out the reaction L-lysyl-[protein] + 3 S-adenosyl-L-methionine = N(6),N(6),N(6)-trimethyl-L-lysyl-[protein] + 3 S-adenosyl-L-homocysteine + 3 H(+). In terms of biological role, methylates ribosomal protein L11. This chain is Ribosomal protein L11 methyltransferase, found in Salmonella agona (strain SL483).